The sequence spans 140 residues: uncharacterized protein (140 aa).

Residues 21 to 42 (CPYCNYTNADVKAIKKHIKSKH) form a C2H2-type zinc finger.

It to M.jannaschii MJECL27.

This is an uncharacterized protein from Methanocaldococcus jannaschii (strain ATCC 43067 / DSM 2661 / JAL-1 / JCM 10045 / NBRC 100440) (Methanococcus jannaschii).